The sequence spans 234 residues: Chalcone--flavanone isomerase 1 (234 aa).

Positions 50, 115, and 192 each coordinate substrate.

This sequence belongs to the chalcone isomerase family.

The catalysed reaction is a chalcone = a flavanone.. The protein operates within secondary metabolite biosynthesis; flavonoid biosynthesis. Functionally, catalyzes the intramolecular cyclization of bicyclic chalcones into tricyclic (S)-flavanones. Responsible for the isomerization of 4,2',4',6'-tetrahydroxychalcone (also termed chalcone) into naringenin. This is Chalcone--flavanone isomerase 1 (CHI1) from Vitis vinifera (Grape).